A 236-amino-acid chain; its full sequence is UPF0502 protein Bcen2424_5610 (236 aa).

This sequence belongs to the UPF0502 family.

The polypeptide is UPF0502 protein Bcen2424_5610 (Burkholderia cenocepacia (strain HI2424)).